Reading from the N-terminus, the 426-residue chain is Enolase 2 (426 aa).

A (2R)-2-phosphoglycerate-binding site is contributed by Q163. E205 (proton donor) is an active-site residue. Positions 242, 285, and 312 each coordinate Mg(2+). 4 residues coordinate (2R)-2-phosphoglycerate: K337, R366, S367, and K388. Residue K337 is the Proton acceptor of the active site.

The protein belongs to the enolase family. Mg(2+) serves as cofactor.

It is found in the cytoplasm. The protein localises to the secreted. Its subcellular location is the cell surface. The enzyme catalyses (2R)-2-phosphoglycerate = phosphoenolpyruvate + H2O. It participates in carbohydrate degradation; glycolysis; pyruvate from D-glyceraldehyde 3-phosphate: step 4/5. Its function is as follows. Catalyzes the reversible conversion of 2-phosphoglycerate (2-PG) into phosphoenolpyruvate (PEP). It is essential for the degradation of carbohydrates via glycolysis. The polypeptide is Enolase 2 (Methanospirillum hungatei JF-1 (strain ATCC 27890 / DSM 864 / NBRC 100397 / JF-1)).